A 491-amino-acid chain; its full sequence is Protein nucleotidyltransferase YdiU (491 aa).

ATP contacts are provided by glycine 92, glycine 94, arginine 95, lysine 115, aspartate 127, glycine 128, arginine 178, and arginine 185. Aspartate 254 serves as the catalytic Proton acceptor. Mg(2+) contacts are provided by asparagine 255 and aspartate 264. Aspartate 264 lines the ATP pocket.

Belongs to the SELO family. Mg(2+) is required as a cofactor. It depends on Mn(2+) as a cofactor.

The enzyme catalyses L-seryl-[protein] + ATP = 3-O-(5'-adenylyl)-L-seryl-[protein] + diphosphate. It catalyses the reaction L-threonyl-[protein] + ATP = 3-O-(5'-adenylyl)-L-threonyl-[protein] + diphosphate. It carries out the reaction L-tyrosyl-[protein] + ATP = O-(5'-adenylyl)-L-tyrosyl-[protein] + diphosphate. The catalysed reaction is L-histidyl-[protein] + UTP = N(tele)-(5'-uridylyl)-L-histidyl-[protein] + diphosphate. The enzyme catalyses L-seryl-[protein] + UTP = O-(5'-uridylyl)-L-seryl-[protein] + diphosphate. It catalyses the reaction L-tyrosyl-[protein] + UTP = O-(5'-uridylyl)-L-tyrosyl-[protein] + diphosphate. Its function is as follows. Nucleotidyltransferase involved in the post-translational modification of proteins. It can catalyze the addition of adenosine monophosphate (AMP) or uridine monophosphate (UMP) to a protein, resulting in modifications known as AMPylation and UMPylation. This is Protein nucleotidyltransferase YdiU from Mycolicibacterium paratuberculosis (strain ATCC BAA-968 / K-10) (Mycobacterium paratuberculosis).